A 399-amino-acid chain; its full sequence is UDP-galactopyranose mutase (399 aa).

Residues serine 25, 44 to 45, asparagine 52, and 71 to 72 contribute to the FAD site; these read EK and HI. UDP-alpha-D-galactose is bound by residues serine 171, tryptophan 175, tyrosine 200, asparagine 297, arginine 306, and tyrosine 345. Arginine 374 lines the FAD pocket. Tyrosine 380 is a UDP-alpha-D-galactose binding site. FAD is bound at residue 381-386; it reads IDMDRA.

It belongs to the UDP-galactopyranose/dTDP-fucopyranose mutase family. FAD serves as cofactor.

It carries out the reaction UDP-alpha-D-galactose = UDP-alpha-D-galactofuranose. Functionally, involved in the conversion of UDP-GalP into UDP-GalF through a 2-keto intermediate. In Mycoplasma pneumoniae (strain ATCC 29342 / M129 / Subtype 1) (Mycoplasmoides pneumoniae), this protein is UDP-galactopyranose mutase (glf).